A 1416-amino-acid chain; its full sequence is DNA-directed RNA polymerase subunit beta' (1416 aa).

Cys60, Cys62, Cys75, and Cys78 together coordinate Zn(2+). 3 residues coordinate Mg(2+): Asp449, Asp451, and Asp453. Cys781, Cys855, Cys862, and Cys865 together coordinate Zn(2+).

It belongs to the RNA polymerase beta' chain family. In terms of assembly, the RNAP catalytic core consists of 2 alpha, 1 beta, 1 beta' and 1 omega subunit. When a sigma factor is associated with the core the holoenzyme is formed, which can initiate transcription. It depends on Mg(2+) as a cofactor. Requires Zn(2+) as cofactor.

The enzyme catalyses RNA(n) + a ribonucleoside 5'-triphosphate = RNA(n+1) + diphosphate. In terms of biological role, DNA-dependent RNA polymerase catalyzes the transcription of DNA into RNA using the four ribonucleoside triphosphates as substrates. The polypeptide is DNA-directed RNA polymerase subunit beta' (Treponema pallidum (strain Nichols)).